The chain runs to 278 residues: ITGAEGGAPDAPLVLVGAHPAARLRGDPRVRWFHSVNAGVDALLDGGWPAGVLLTRTVGRMGERIGQYALAWVLADCQGVPGHLARTAAPPGAANPPNWPRGQTALVYGTGHIGTAVASRLGAAGLHTVGVGRAEHAPGGPFDERITAGEDGPWLGRARFVVDALPLTDATRDFFADARLSALRGATFLNVGRGATVSLPALGRALAAGHVRGAVLDVLTDEPPAPGHPVWELPRTTLTSHSAGITAGTDITADFRACWEALRAGQAPELAVRVGRGY.

NAD(+)-binding positions include 112–113, 191–193, and Asp-217; these read HI and VGR. Arg-193 is an active-site residue. Glu-222 is a catalytic residue. Catalysis depends on His-241, which acts as the Proton donor. 241 to 244 provides a ligand contact to NAD(+); sequence HSAG.

Belongs to the D-isomer specific 2-hydroxyacid dehydrogenase family.

This is an uncharacterized protein from Streptomyces coelicolor.